Consider the following 334-residue polypeptide: Glycerol-3-phosphate dehydrogenase [NAD(P)+] (334 aa).

Residues Ser10, Trp11, His31, Arg32, and Lys105 each contribute to the NADPH site. Positions 105, 136, and 138 each coordinate sn-glycerol 3-phosphate. Ala140 contributes to the NADPH binding site. Sn-glycerol 3-phosphate is bound by residues Lys191, Asp244, Ser254, Arg255, and Asn256. Catalysis depends on Lys191, which acts as the Proton acceptor. Arg255 is a binding site for NADPH. NADPH-binding residues include Val279 and Glu281.

This sequence belongs to the NAD-dependent glycerol-3-phosphate dehydrogenase family.

It is found in the cytoplasm. The enzyme catalyses sn-glycerol 3-phosphate + NAD(+) = dihydroxyacetone phosphate + NADH + H(+). It carries out the reaction sn-glycerol 3-phosphate + NADP(+) = dihydroxyacetone phosphate + NADPH + H(+). It participates in membrane lipid metabolism; glycerophospholipid metabolism. Functionally, catalyzes the reduction of the glycolytic intermediate dihydroxyacetone phosphate (DHAP) to sn-glycerol 3-phosphate (G3P), the key precursor for phospholipid synthesis. The sequence is that of Glycerol-3-phosphate dehydrogenase [NAD(P)+] from Chlorobium phaeobacteroides (strain BS1).